The sequence spans 521 residues: Importin subunit alpha-3 (521 aa).

Residue A2 is modified to N-acetylalanine. The 57-residue stretch at 2–58 folds into the IBB domain; the sequence is ADNEKLDNQRLKNFKNKGRDLETMRRQRNEVVVELRKNKRDEHLLKRRNVPHEDICE. The short motif at 43-52 is the Nuclear localization signal element; that stretch reads EHLLKRRNVP. A Phosphoserine modification is found at S60. The ARM 1; truncated repeat unit spans residues 66-106; it reads YRVQNTSLEAIVQNASSDNQGIQLSAVQAARKLLSSDRNPP. ARM repeat units follow at residues 107–149, 150–194, 195–233, 234–278, 279–318, 319–360, 361–400, and 401–443; these read IDDL…TSEQ, TQAV…CRDY, VISL…HKDP, PPPM…EQIQ, MVID…TDEQ, TQVV…NQQQ, VQAV…ISGR, and KDQV…KMAE. Residues 137–229 are NLS binding site (major); that stretch reads WALTNIASGT…VTWVMVNLCR (93 aa). The interval 306–394 is NLS binding site (minor); it reads RAVGNIVTGT…QKEAAWAISN (89 aa). The ARM 10; atypical repeat unit spans residues 447–485; the sequence is ETIGNLIEECGGLEKIEQLQNHENEDIYKLAYEIIDQFF.

The protein belongs to the importin alpha family. Forms a complex with importin subunit beta-1 (KPNB1). Interacts with SNAI1. Interacts with TALDO1 isoform 1. Interacts with CYB1. As to quaternary structure, (Microbial infection) Interacts with MERS virus protein OF4b; this interaction prevents the translocation of NF-kappa-B complex to the nucleus. In terms of assembly, (Microbial infection) Interacts with human adenovirus 5 E1A protein; this interaction allows E1A import into the host nucleus. (Microbial infection) Interacts with Chikungunya virus capsid protein; this interaction allows the nuclear import of the viral capsid protein. As to expression, highly expressed in testis, ovary, small intestine, heart, skeletal muscle, lung and pancreas, but barely detectable in kidney, thymus, colon and peripheral blood leukocytes.

Its subcellular location is the cytoplasm. It localises to the nucleus. Its function is as follows. Functions in nuclear protein import as an adapter protein for nuclear receptor KPNB1. Binds specifically and directly to substrates containing either a simple or bipartite NLS motif. Docking of the importin/substrate complex to the nuclear pore complex (NPC) is mediated by KPNB1 through binding to nucleoporin FxFG repeats and the complex is subsequently translocated through the pore by an energy requiring, Ran-dependent mechanism. At the nucleoplasmic side of the NPC, Ran binds to importin-beta and the three components separate and importin-alpha and -beta are re-exported from the nucleus to the cytoplasm where GTP hydrolysis releases Ran from importin. The directionality of nuclear import is thought to be conferred by an asymmetric distribution of the GTP- and GDP-bound forms of Ran between the cytoplasm and nucleus. Mediates nuclear import of AARS1, MRTFA and RANBP3. Functionally, (Microbial infection) In vitro, mediates the nuclear import of human cytomegalovirus UL84 by recognizing a non-classical NLS. In vitro, mediates the nuclear import of human cytomegalovirus UL84 by recognizing a non-classical NLS. The sequence is that of Importin subunit alpha-3 from Homo sapiens (Human).